A 215-amino-acid polypeptide reads, in one-letter code: Cytochrome b6 (215 aa).

Residues 32–52 traverse the membrane as a helical segment; sequence IFHCLGGITLTCFLVQVATGF. Cys35 is a binding site for heme c. Heme b is bound by residues His86 and His100. 3 helical membrane passes run 90-110, 116-136, and 186-206; these read ASMM…TGGF, LTWV…VTGY, and LHTF…FPMI. The heme b site is built by His187 and His202.

The protein belongs to the cytochrome b family. PetB subfamily. In terms of assembly, the 4 large subunits of the cytochrome b6-f complex are cytochrome b6, subunit IV (17 kDa polypeptide, PetD), cytochrome f and the Rieske protein, while the 4 small subunits are PetG, PetL, PetM and PetN. The complex functions as a dimer. Requires heme b as cofactor. Heme c serves as cofactor.

The protein localises to the plastid. Its subcellular location is the chloroplast thylakoid membrane. Functionally, component of the cytochrome b6-f complex, which mediates electron transfer between photosystem II (PSII) and photosystem I (PSI), cyclic electron flow around PSI, and state transitions. The protein is Cytochrome b6 of Calycanthus floridus var. glaucus (Eastern sweetshrub).